Reading from the N-terminus, the 141-residue chain is HTH-type transcriptional repressor NsrR (141 aa).

Residues 2-129 (QLTSFTDYGL…DNYTLADLVE (128 aa)) form the HTH rrf2-type domain. The H-T-H motif DNA-binding region spans 28–51 (ISEVTDVYGVSRNHMVKIINQLSR). Positions 91, 96, and 102 each coordinate [2Fe-2S] cluster.

[2Fe-2S] cluster is required as a cofactor.

Nitric oxide-sensitive repressor of genes involved in protecting the cell against nitrosative stress. May require iron for activity. In Escherichia coli O127:H6 (strain E2348/69 / EPEC), this protein is HTH-type transcriptional repressor NsrR.